We begin with the raw amino-acid sequence, 252 residues long: Mitochondrial cardiolipin hydrolase (252 aa).

Residues 1-4 (MGRL) are Mitochondrial intermembrane-facing. The required for mitochondrial localization stretch occupies residues 1–39 (MGRLSWQVAAAAAVGLALTLEALPWVLRWLRSRRRRPRR). The helical transmembrane segment at 5–27 (SWQVAAAAAVGLALTLEALPWVL) threads the bilayer. Residues 28-252 (RWLRSRRRRP…TCGTSSESQT (225 aa)) lie on the Cytoplasmic side of the membrane. Residues 45–78 (PSQVTCTEALLRAPGAELAELPEGCPCGLPHGES) form a C3H1-type; atypical zinc finger. One can recognise a PLD phosphodiesterase domain in the interval 151-178 (DPGYMHHKFAIVDKRVLITGSLNWTTQA). Active-site residues include His156, Lys158, and Asp163.

The protein belongs to the phospholipase D family. MitoPLD/Zucchini subfamily. In terms of assembly, homodimer. Interacts with MOV10L1. Interacts with MIGA1 and MIGA2; possibly facilitating homodimer formation. Interacts with GK2. As to expression, predominantly expressed in testis and ovary, but not limited to gonads (at protein level). It is also found in brain, heart, pituitary gland, prostate, pancreas, thyroid, bone marrow, lung and muscle.

Its subcellular location is the mitochondrion outer membrane. The protein localises to the golgi apparatus. It carries out the reaction a cardiolipin + H2O = a 1,2-diacyl-sn-glycero-3-phospho-(1'-sn-glycerol) + a 1,2-diacyl-sn-glycero-3-phosphate + H(+). MYC stimulates its phospholipase activity. MIGA1 and MIGA2 increase PLD6 self-association affinity and affects the homodimer conformation facilitating its phospholipase activity over the nuclease activity. Single stranded DNA (ssDNA) hydrolase activity does not depend upon, but is stimulated by the presence of Ca(2+) and Mn(2+). In terms of biological role, presents phospholipase and nuclease activities, depending on the different physiological conditions. Interaction with Mitoguardin (MIGA1 or MIGA2) affects the dimer conformation, facilitating the lipase activity over the nuclease activity. Plays a key role in mitochondrial fusion and fission via its phospholipase activity. In its phospholipase role, it uses the mitochondrial lipid cardiolipin as substrate to generate phosphatidate (PA or 1,2-diacyl-sn-glycero-3-phosphate), a second messenger signaling lipid. Production of PA facilitates Mitofusin-mediated fusion, whereas the cleavage of PA by the Lipin family of phosphatases produces diacylgycerol (DAG) which promotes mitochondrial fission. Both Lipin and DAG regulate mitochondrial dynamics and membrane fusion/fission, important processes for adapting mitochondrial metabolism to changes in cell physiology. Mitochondrial fusion enables cells to cope with the increased nucleotide demand during DNA synthesis. Mitochondrial function and dynamics are closely associated with biological processes such as cell growth, proliferation, and differentiation. Mediator of MYC activity, promotes mitochondrial fusion and activates AMPK which in turn inhibits YAP/TAZ, thereby inducing cell growth and proliferation. The endonuclease activity plays a critical role in PIWI-interacting RNA (piRNA) biogenesis during spermatogenesis. Implicated in spermatogenesis and sperm fertility in testicular germ cells, its single strand-specific nuclease activity is critical for the biogenesis/maturation of PIWI-interacting RNA (piRNA). MOV10L1 selectively binds to piRNA precursors and funnels them to the endonuclease that catalyzes the first cleavage step of piRNA processing to generate piRNA intermediate fragments that are subsequently loaded to Piwi proteins. Cleaves either DNA or RNA substrates with similar affinity, producing a 5' phosphate end, in this way it participates in the processing of primary piRNA transcripts. piRNAs provide essential protection against the activity of mobile genetic elements. piRNA-mediated transposon silencing is thus critical for maintaining genome stability, in particular in germline cells when transposons are mobilized as a consequence of wide-spread genomic demethylation. PA may act as signaling molecule in the recognition/transport of the precursor RNAs of primary piRNAs. Interacts with tesmin in testes, suggesting a role in spermatogenesis via association with its interacting partner. The polypeptide is Mitochondrial cardiolipin hydrolase (PLD6) (Homo sapiens (Human)).